The sequence spans 511 residues: Bifunctional purine biosynthesis protein PurH (511 aa).

An MGS-like domain is found at Met-1–Val-145.

The protein belongs to the PurH family.

The enzyme catalyses (6R)-10-formyltetrahydrofolate + 5-amino-1-(5-phospho-beta-D-ribosyl)imidazole-4-carboxamide = 5-formamido-1-(5-phospho-D-ribosyl)imidazole-4-carboxamide + (6S)-5,6,7,8-tetrahydrofolate. The catalysed reaction is IMP + H2O = 5-formamido-1-(5-phospho-D-ribosyl)imidazole-4-carboxamide. It participates in purine metabolism; IMP biosynthesis via de novo pathway; 5-formamido-1-(5-phospho-D-ribosyl)imidazole-4-carboxamide from 5-amino-1-(5-phospho-D-ribosyl)imidazole-4-carboxamide (10-formyl THF route): step 1/1. Its pathway is purine metabolism; IMP biosynthesis via de novo pathway; IMP from 5-formamido-1-(5-phospho-D-ribosyl)imidazole-4-carboxamide: step 1/1. In Bacillus cytotoxicus (strain DSM 22905 / CIP 110041 / 391-98 / NVH 391-98), this protein is Bifunctional purine biosynthesis protein PurH.